A 244-amino-acid chain; its full sequence is CTD nuclear envelope phosphatase 1 (244 aa).

A helical transmembrane segment spans residues 7 to 29 (LLGLRTFVAFAAKLWSFFIYLLR). The FCP1 homology domain maps to 57-224 (AQVKRKILVL…LNLLPMLDAL (168 aa)).

It belongs to the dullard family. In terms of assembly, (Microbial infection) Interacts with Chandipura virus matrix protein. Interacts with CNEP1R1; the complex dephosphorylates LPIN1 and LPIN2. Muscle specific with lower expression in other metabolic tissues.

The protein resides in the endoplasmic reticulum membrane. Its subcellular location is the nucleus membrane. It catalyses the reaction O-phospho-L-seryl-[protein] + H2O = L-seryl-[protein] + phosphate. The catalysed reaction is O-phospho-L-threonyl-[protein] + H2O = L-threonyl-[protein] + phosphate. In terms of biological role, serine/threonine protein phosphatase forming with CNEP1R1 an active phosphatase complex that dephosphorylates and may activate LPIN1 and LPIN2. LPIN1 and LPIN2 are phosphatidate phosphatases that catalyze the conversion of phosphatidic acid to diacylglycerol and control the metabolism of fatty acids at different levels. May indirectly modulate the lipid composition of nuclear and/or endoplasmic reticulum membranes and be required for proper nuclear membrane morphology and/or dynamics. May also indirectly regulate the production of lipid droplets and triacylglycerol. May antagonize BMP signaling. This is CTD nuclear envelope phosphatase 1 (CTDNEP1) from Homo sapiens (Human).